The sequence spans 912 residues: Protein translocase subunit SecA (912 aa).

ATP contacts are provided by residues glutamine 87, 105–109, and aspartate 508; that span reads GEGKT. Residues 865–912 are disordered; it reads DEEAAQVQSGNAPLPVSQVTRDEPKVGRNDPCPCGSGKKYKHCHGQLS. Residues cysteine 896, cysteine 898, cysteine 907, and histidine 908 each contribute to the Zn(2+) site. The span at 902–912 shows a compositional bias: basic residues; the sequence is KKYKHCHGQLS.

The protein belongs to the SecA family. In terms of assembly, monomer and homodimer. Part of the essential Sec protein translocation apparatus which comprises SecA, SecYEG and auxiliary proteins SecDF-YajC and YidC. It depends on Zn(2+) as a cofactor.

The protein localises to the cell inner membrane. The protein resides in the cytoplasm. It carries out the reaction ATP + H2O + cellular proteinSide 1 = ADP + phosphate + cellular proteinSide 2.. Its function is as follows. Part of the Sec protein translocase complex. Interacts with the SecYEG preprotein conducting channel. Has a central role in coupling the hydrolysis of ATP to the transfer of proteins into and across the cell membrane, serving both as a receptor for the preprotein-SecB complex and as an ATP-driven molecular motor driving the stepwise translocation of polypeptide chains across the membrane. In Xanthomonas oryzae pv. oryzae (strain PXO99A), this protein is Protein translocase subunit SecA.